Here is a 174-residue protein sequence, read N- to C-terminus: Non-classical export protein 2 homolog 1 (174 aa).

Over 1–7 the chain is Cytoplasmic; it reads MLSAADN. The chain crosses the membrane as a helical span at residues 8–28; that stretch reads LVRIINAVFLIISIGLISGLI. At 29 to 41 the chain is on the extracellular side; the sequence is GTQTKHSSRVNFC. The chain crosses the membrane as a helical span at residues 42–62; the sequence is MFAAVYGLVTDSLYGFLANFW. The Cytoplasmic segment spans residues 63–69; the sequence is TSLTYPA. The helical transmembrane segment at 70 to 90 threads the bilayer; sequence ILLVLDFLNFIFTFVAATALA. Over 91–122 the chain is Extracellular; it reads VGIRCHSCKNKTYLEQNKIIQGSSSRCHQSQA. A helical transmembrane segment spans residues 123–143; it reads AVAFFYFSCFLFLIKVTVATM. The Cytoplasmic portion of the chain corresponds to 144-174; the sequence is GMMQNGGFGSNTGFSRRRARRQMGIPTISQV.

This sequence belongs to the NCE102 family.

Its subcellular location is the cell membrane. Its function is as follows. Involved in membrane organization. Required for the formation of membrane compartments of CAN1 (MCCs), localization of CAN1 at the MCCs and subsequent invagination of the plasma membrane at the MCCs sites. Involved in eisosome organization and might act as a sensor of sphingolipids that regulates plasma membrane function. Involved in a novel pathway of export of proteins that lack a cleavable signal sequence. Non-classical export pathway also functions as an alternative clearance/detoxification pathway to eliminate damaged material, when the basic repair pathway is not sufficient. The sequence is that of Non-classical export protein 2 homolog 1 (FHN1) from Saccharomyces cerevisiae (strain ATCC 204508 / S288c) (Baker's yeast).